The chain runs to 174 residues: NADH-ubiquinone oxidoreductase chain 6 (174 aa).

6 helical membrane passes run methionine 1–serine 21, serine 24–leucine 44, glycine 47–phenylalanine 67, valine 86–valine 106, glycine 111–glycine 131, and tryptophan 151–alanine 171.

The protein belongs to the complex I subunit 6 family. In terms of assembly, core subunit of respiratory chain NADH dehydrogenase (Complex I) which is composed of 45 different subunits.

It is found in the mitochondrion inner membrane. It catalyses the reaction a ubiquinone + NADH + 5 H(+)(in) = a ubiquinol + NAD(+) + 4 H(+)(out). Its function is as follows. Core subunit of the mitochondrial membrane respiratory chain NADH dehydrogenase (Complex I) which catalyzes electron transfer from NADH through the respiratory chain, using ubiquinone as an electron acceptor. Essential for the catalytic activity and assembly of complex I. The chain is NADH-ubiquinone oxidoreductase chain 6 (MT-ND6) from Pan troglodytes (Chimpanzee).